Here is a 523-residue protein sequence, read N- to C-terminus: Cryptochrome DASH (523 aa).

Positions 6–142 (RVIICLLRND…KYQTFWGSTL (137 aa)) constitute a Photolyase/cryptochrome alpha/beta domain. 2 disordered regions span residues 174-211 (RPTF…TDPR) and 486-523 (KPAG…NKDV). Basic residues predominate over residues 496–510 (RRGKGPSHTPKQHKN).

This sequence belongs to the DNA photolyase class-1 family. It depends on FAD as a cofactor. The cofactor is (6R)-5,10-methylene-5,6,7,8-tetrahydrofolate.

Functionally, may have a photoreceptor function. Has weak cyclobutyl pyrimidine photolyase activity when expressed in E.coli and when tested in vitro. This Xenopus laevis (African clawed frog) protein is Cryptochrome DASH (cry-dash).